The chain runs to 468 residues: Peroxisome proliferator-activated receptor alpha (468 aa).

The segment at residues 99 to 173 is a DNA-binding region (nuclear receptor); that stretch reads NIECRICGDK…VGMSHNAIRF (75 aa). 2 NR C4-type zinc fingers span residues 102 to 122 and 139 to 161; these read CRIC…CEGC and CDRS…FHKC. The NR LBD domain occupies 239 to 466; sequence FVIHDMETLC…HPLLQEIYRD (228 aa). The interval 304–433 is required for heterodimerization with RXRA; the sequence is DQVTLLKYGV…PKLLQKMVDL (130 aa).

Belongs to the nuclear hormone receptor family. NR1 subfamily. As to quaternary structure, heterodimer; with RXRA. This heterodimerization is required for DNA binding and transactivation activity. Interacts with NCOA3 coactivator. Interacts with CITED2; the interaction stimulates its transcriptional activity. Also interacts with PPARBP in vitro. Interacts with AKAP13, LPIN1, PRDM16 and coactivator NCOA6. Interacts with ASXL1 and ASXL2. Interacts with PER2. Interacts with SIRT1; the interaction seems to be modulated by NAD(+) levels. Interacts with CRY1 and CRY2. In hepatocytes, interacts with PAQR3 and HUWE1; the interactions promote PPARA poylubiquitination and HUWE1-mediated degradation. In terms of processing, ubiquitinated by E3 ubiquitin-protein ligase HUWE1; leading to proteasomal degradation. Post-translationally, phosphorylated. Highly expressed in liver, kidney and heart. Very weakly expressed in brain and testis.

The protein resides in the nucleus. Ligand-activated transcription factor. Key regulator of lipid metabolism. Activated by the endogenous ligand 1-palmitoyl-2-oleoyl-sn-glycerol-3-phosphocholine (16:0/18:1-GPC). Activated by oleylethanolamide, a naturally occurring lipid that regulates satiety. Receptor for peroxisome proliferators such as hypolipidemic drugs and fatty acids. Regulates the peroxisomal beta-oxidation pathway of fatty acids. Functions as a transcription activator for the ACOX1 and P450 genes. Transactivation activity requires heterodimerization with RXRA and is antagonized by NR2C2. May be required for the propagation of clock information to metabolic pathways regulated by PER2. This Mus musculus (Mouse) protein is Peroxisome proliferator-activated receptor alpha (Ppara).